Reading from the N-terminus, the 226-residue chain is Urease accessory protein UreG (226 aa).

Residues 1-26 form a disordered region; sequence MPPHFLDGQPHGHTDRPRRVRQPGEP. 33 to 40 lines the GTP pocket; it reads GPVGSGKT.

This sequence belongs to the SIMIBI class G3E GTPase family. UreG subfamily. Homodimer. UreD, UreF and UreG form a complex that acts as a GTP-hydrolysis-dependent molecular chaperone, activating the urease apoprotein by helping to assemble the nickel containing metallocenter of UreC. The UreE protein probably delivers the nickel.

The protein localises to the cytoplasm. Its function is as follows. Facilitates the functional incorporation of the urease nickel metallocenter. This process requires GTP hydrolysis, probably effectuated by UreG. This chain is Urease accessory protein UreG, found in Mycolicibacterium vanbaalenii (strain DSM 7251 / JCM 13017 / BCRC 16820 / KCTC 9966 / NRRL B-24157 / PYR-1) (Mycobacterium vanbaalenii).